The sequence spans 329 residues: Probable nicotianamine synthase 7 (329 aa).

Belongs to the nicotianamine synthase (NAS)-like family.

The enzyme catalyses 3 S-adenosyl-L-methionine = nicotianamine + 3 S-methyl-5'-thioadenosine + 3 H(+). Functionally, synthesizes nicotianamine, a polyamine that is the first intermediate in the synthesis of the phytosiderophores of the mugineic acid type found in gramineae which serves as a sensor for the physiological iron status within the plant, and/or might be involved in the transport of iron. The polypeptide is Probable nicotianamine synthase 7 (NAS7) (Hordeum vulgare (Barley)).